The following is a 1650-amino-acid chain: Phosphatidylinositol 3,4,5-trisphosphate-dependent Rac exchanger 1 protein (1650 aa).

The segment covering 1 to 19 has biased composition (gly residues); sequence MEAPGSGGGDGGGDPGGDG. Residues 1–33 form a disordered region; sequence MEAPGSGGGDGGGDPGGDGAHPDARGPVSGPCA. In terms of domain architecture, DH spans 44–235; it reads LRLCVLNEIL…KTVCSNINET (192 aa). Positions 266–387 constitute a PH domain; that stretch reads ELLLQGNLLK…WLDALIRERE (122 aa). Serine 314 bears the Phosphoserine mark. DEP domains lie at 416-491 and 518-592; these read MSKK…RFRY and SLYA…RFHA. The PDZ domain occupies 620 to 698; the sequence is RLLIPPQEDD…SRRPLRLLVA (79 aa). The disordered stretch occupies residues 793–813; it reads ARASQGAPDEDPQEDDQPDSA. A compositionally biased stretch (acidic residues) spans 800–810; sequence PDEDPQEDDQP. Serine 991 carries the post-translational modification Phosphoserine. 2 disordered regions span residues 1022-1047 and 1099-1129; these read SPAV…GAPS and PTSA…EVDR. Residues 1030 to 1047 show a composition bias toward polar residues; the sequence is QGQGLNDSSYGSASGAPS. The span at 1109–1122 shows a compositional bias: low complexity; the sequence is PSLVEETSSSPPVS. 2 positions are modified to phosphoserine: serine 1186 and serine 1191.

As to quaternary structure, interacts preferentially with RAC2. Interacts with RAC1. Interacts with AUTS2.

The protein resides in the cytoplasm. Its subcellular location is the cytosol. It is found in the cell membrane. In terms of biological role, functions as a RAC guanine nucleotide exchange factor (GEF), which activates the Rac proteins by exchanging bound GDP for free GTP. Its activity is synergistically activated by phosphatidylinositol 3,4,5-trisphosphate and the beta gamma subunits of heterotrimeric G protein. May function downstream of heterotrimeric G proteins in neutrophils. In Mus musculus (Mouse), this protein is Phosphatidylinositol 3,4,5-trisphosphate-dependent Rac exchanger 1 protein (Prex1).